Reading from the N-terminus, the 699-residue chain is Conditioned medium factor (699 aa).

Residues 1-18 (MRLLLLLILIITINFSYG) form the signal peptide. N-linked (GlcNAc...) asparagine glycans are attached at residues Asn130, Asn283, Asn346, and Asn430. The disordered stretch occupies residues 680–699 (SPQQTTNTEYNKEMSSNSVW).

In terms of processing, N- and O-glycosylated. Post-translationally, the N-terminus is blocked.

Involved in cell density sensing and might synchronize the onset of development by triggering aggregation when a majority of the cells in a given area have starved. The polypeptide is Conditioned medium factor (cmfA) (Dictyostelium discoideum (Social amoeba)).